The following is a 103-amino-acid chain: Co-chaperonin GroES (103 aa).

The protein belongs to the GroES chaperonin family. In terms of assembly, heptamer of 7 subunits arranged in a ring. Interacts with the chaperonin GroEL.

Its subcellular location is the cytoplasm. Its function is as follows. Together with the chaperonin GroEL, plays an essential role in assisting protein folding. The GroEL-GroES system forms a nano-cage that allows encapsulation of the non-native substrate proteins and provides a physical environment optimized to promote and accelerate protein folding. GroES binds to the apical surface of the GroEL ring, thereby capping the opening of the GroEL channel. The polypeptide is Co-chaperonin GroES (Nostoc sp. (strain PCC 7120 / SAG 25.82 / UTEX 2576)).